Consider the following 301-residue polypeptide: POU domain, class 6, transcription factor 1 (301 aa).

2 consecutive repeat copies span residues 11–17 (NAQGQVI) and 50–56 (NAQGQVI). The tract at residues 11 to 56 (NAQGQVIGALPWVVNSASVATPAPAQSLQVQAVTPQLLLNAQGQVI) is 2 X 7 AA repeats of N-A-Q-G-Q-V-I. Residues 66–88 (QPVAVRKPSTPESPAKSEVQPIQ) form a disordered region. One can recognise a POU-specific domain in the interval 139 to 213 (EDGINLEEIR…VLEKWLNEAE (75 aa)). A DNA-binding region (homeobox) is located at residues 234-293 (KRKRRTSFTPQAIEALNAYFEKNPLPTGQEITEIAKELNYDREVVRVWFCNRRQTLKNTS).

It belongs to the POU transcription factor family. Class-6 subfamily. As to expression, in the embryo, widely expressed, with highest levels in the developing brain and spinal cord. In the adult, mostly found in the brain, where it is diffusely expressed with the exception of an enrichment in layer IV of the neocortex. Also found in kidney, lung, heart, adrenal, skin, and placenta. Low levels in spleen, muscle, liver, anterior pituitary, testis and ovary.

It localises to the nucleus. In terms of biological role, transcription factor that binds preferentially to a variant of the octamer motif (5'-ATGATAAT-3'). The polypeptide is POU domain, class 6, transcription factor 1 (Pou6f1) (Rattus norvegicus (Rat)).